A 101-amino-acid chain; its full sequence is Ubiquitin-related modifier 1 (101 aa).

G101 is modified (1-thioglycine). A Glycyl lysine isopeptide (Gly-Lys) (interchain with K-? in acceptor proteins) cross-link involves residue G101.

Belongs to the URM1 family. As to quaternary structure, component of a complex at least composed of URM1, CTU2/NCS2 and CTU1/ATPBD3. Post-translationally, C-terminal thiocarboxylation occurs in 2 steps, it is first acyl-adenylated (-COAMP) via the hesA/moeB/thiF part of MOCS3, then thiocarboxylated (-COSH) via the rhodanese domain of MOCS3.

The protein resides in the cytoplasm. Its pathway is tRNA modification; 5-methoxycarbonylmethyl-2-thiouridine-tRNA biosynthesis. Its function is as follows. Acts as a sulfur carrier required for 2-thiolation of mcm(5)S(2)U at tRNA wobble positions of cytosolic tRNA(Lys), tRNA(Glu) and tRNA(Gln). Serves as sulfur donor in tRNA 2-thiolation reaction by being thiocarboxylated (-COSH) at its C-terminus by MOCS3. The sulfur is then transferred to tRNA to form 2-thiolation of mcm(5)S(2)U. Also acts as a ubiquitin-like protein (UBL) that is covalently conjugated via an isopeptide bond to lysine residues of target proteins such as MOCS3, ATPBD3, CTU2, USP15 and CAS. The thiocarboxylated form serves as substrate for conjugation and oxidative stress specifically induces the formation of UBL-protein conjugates. The polypeptide is Ubiquitin-related modifier 1 (Homo sapiens (Human)).